We begin with the raw amino-acid sequence, 357 residues long: MSSLSDLINFNLSDSTEKIIAEYIWVGGSGIDIRSKARTLPGPVSDPAKLPKWNYDGSSTNQAPGKDSEVILYPQAIFKDPFRRGNNILVICDVYTPAGEPLPTNKRYNAAKIFSHPDVAAEVPWYGIEQEYTLLQKDINWPLGWPIGGYPGKQGPYYCGIGADKAYGRDIVDAHYKACLFAGINISGINGEVMPGQWEFQVGPSVGISAGDEIWAARYILERITEIAGVVVSFDPKPIPGDWNGAGAHANFSTKSMRENGGYEVIKKAIEKLGLRHKEHIAAYGEGNERRLTGKHETADINVFSWGVANRGSSIRVGRDTEKDGKGYFEDRRPASNMDPYVVTSMIAETTILWKKP.

Residues 19–99 form the GS beta-grasp domain; that stretch reads IIAEYIWVGG…VICDVYTPAG (81 aa). Residues 106-357 enclose the GS catalytic domain; the sequence is KRYNAAKIFS…AETTILWKKP (252 aa).

The protein belongs to the glutamine synthetase family. Homooctamer.

The protein resides in the cytoplasm. The catalysed reaction is L-glutamate + NH4(+) + ATP = L-glutamine + ADP + phosphate + H(+). The sequence is that of Glutamine synthetase root isozyme A (GS3A) from Pisum sativum (Garden pea).